Consider the following 94-residue polypeptide: uncharacterized protein (94 aa).

An N-terminal signal peptide occupies residues 1 to 19; sequence MKFSGLILGALALVSGAIA.

This sequence belongs to the protease inhibitor I9 family.

This is an uncharacterized protein from Neurospora crassa (strain ATCC 24698 / 74-OR23-1A / CBS 708.71 / DSM 1257 / FGSC 987).